The following is a 76-amino-acid chain: DNA gyrase inhibitor YacG (76 aa).

Zn(2+) is bound by residues Cys20, Cys23, Cys39, and Cys43. The disordered stretch occupies residues 54–76 (EEKSIPGAPDLSDSDGWSDDMGY). Positions 65-76 (SDSDGWSDDMGY) are enriched in acidic residues.

This sequence belongs to the DNA gyrase inhibitor YacG family. Interacts with GyrB. Requires Zn(2+) as cofactor.

Functionally, inhibits all the catalytic activities of DNA gyrase by preventing its interaction with DNA. Acts by binding directly to the C-terminal domain of GyrB, which probably disrupts DNA binding by the gyrase. The protein is DNA gyrase inhibitor YacG of Photobacterium profundum (strain SS9).